The following is a 346-amino-acid chain: Dihydroorotase (346 aa).

The Zn(2+) site is built by histidine 13 and histidine 15. Substrate-binding positions include 15-17 (HLR) and asparagine 41. Zn(2+)-binding residues include lysine 99, histidine 136, and histidine 174. Residue lysine 99 is modified to N6-carboxylysine. Residue histidine 136 participates in substrate binding. Residue leucine 219 participates in substrate binding. Aspartate 247 serves as a coordination point for Zn(2+). Aspartate 247 is an active-site residue. Residues histidine 251 and alanine 263 each contribute to the substrate site.

The protein belongs to the metallo-dependent hydrolases superfamily. DHOase family. Class II DHOase subfamily. Homodimer. It depends on Zn(2+) as a cofactor.

The enzyme catalyses (S)-dihydroorotate + H2O = N-carbamoyl-L-aspartate + H(+). It functions in the pathway pyrimidine metabolism; UMP biosynthesis via de novo pathway; (S)-dihydroorotate from bicarbonate: step 3/3. Its function is as follows. Catalyzes the reversible cyclization of carbamoyl aspartate to dihydroorotate. In Rhizobium rhizogenes (strain K84 / ATCC BAA-868) (Agrobacterium radiobacter), this protein is Dihydroorotase.